The sequence spans 192 residues: Actin, muscle (192 aa).

The protein belongs to the actin family.

The protein localises to the cytoplasm. It localises to the cytoskeleton. The enzyme catalyses ATP + H2O = ADP + phosphate + H(+). In terms of biological role, actins are highly conserved proteins that are involved in various types of cell motility and are ubiquitously expressed in all eukaryotic cells. The polypeptide is Actin, muscle (Chionoecetes opilio (Atlantic snow crab)).